Reading from the N-terminus, the 603-residue chain is Prostaglandin G/H synthase 2 (603 aa).

Positions 1–17 are cleaved as a signal peptide; it reads MLLPCALLAALLAAGHA. The EGF-like domain maps to 18–55; sequence ANPCCSLPCQNRGVCMTTGFDRYECDCTRTGYYGENCT. Cystine bridges form between C21–C32, C22–C145, C26–C42, and C44–C54. Residues N53 and N90 are each glycosylated (N-linked (GlcNAc...) asparagine). R106 is a binding site for substrate. A glycan (N-linked (GlcNAc...) asparagine) is linked at N130. H193 (proton acceptor) is an active-site residue. Y341 contributes to the substrate binding site. Catalysis depends on Y371, which acts as the For cyclooxygenase activity. Position 374 (H374) interacts with heme b. C555 and C561 are disulfide-bonded.

It belongs to the prostaglandin G/H synthase family. In terms of assembly, homodimer. Requires heme b as cofactor.

The protein localises to the microsome membrane. The protein resides in the endoplasmic reticulum membrane. It catalyses the reaction (5Z,8Z,11Z,14Z)-eicosatetraenoate + AH2 + 2 O2 = prostaglandin H2 + A + H2O. It carries out the reaction (9Z,12Z)-octadecadienoate + AH2 + O2 = (9R)-hydroxy-(10E,12Z)-octadecadienoate + A + H2O. The catalysed reaction is (9Z,12Z)-octadecadienoate + AH2 + O2 = (9S)-hydroxy-(10E,12Z)-octadecadienoate + A + H2O. The enzyme catalyses (9Z,12Z)-octadecadienoate + AH2 + O2 = (13S)-hydroxy-(9Z,11E)-octadecadienoate + A + H2O. It catalyses the reaction (9Z,12Z)-octadecadienoate + AH2 + O2 = (13R)-hydroxy-(9Z,11E)-octadecadienoate + A + H2O. It functions in the pathway lipid metabolism; prostaglandin biosynthesis. In terms of biological role, dual cyclooxygenase and peroxidase in the biosynthesis pathway of prostanoids, a class of C20 oxylipins mainly derived from arachidonate ((5Z,8Z,11Z,14Z)-eicosatetraenoate, AA, C20:4(n-6)), with a particular role in the inflammatory response. The cyclooxygenase activity oxygenates AA to the hydroperoxy endoperoxide prostaglandin G2 (PGG2), and the peroxidase activity reduces PGG2 to the hydroxy endoperoxide prostaglandin H2 (PGH2), the precursor of all 2-series prostaglandins and thromboxanes. This complex transformation is initiated by abstraction of hydrogen at carbon 13 (with S-stereochemistry), followed by insertion of molecular O2 to form the endoperoxide bridge between carbon 9 and 11 that defines prostaglandins. The insertion of a second molecule of O2 (bis-oxygenase activity) yields a hydroperoxy group in PGG2 that is then reduced to PGH2 by two electrons. Similarly catalyzes successive cyclooxygenation and peroxidation of dihomo-gamma-linoleate (DGLA, C20:3(n-6)) and eicosapentaenoate (EPA, C20:5(n-3)) to corresponding PGH1 and PGH3, the precursors of 1- and 3-series prostaglandins. In an alternative pathway of prostanoid biosynthesis, converts 2-arachidonoyl lysophopholipids to prostanoid lysophopholipids, which are then hydrolyzed by intracellular phospholipases to release free prostanoids. Metabolizes 2-arachidonoyl glycerol yielding the glyceryl ester of PGH2, a process that can contribute to pain response. Generates lipid mediators from n-3 and n-6 polyunsaturated fatty acids (PUFAs) via a lipoxygenase-type mechanism. Oxygenates PUFAs to hydroperoxy compounds and then reduces them to corresponding alcohols. Plays a role in the generation of resolution phase interaction products (resolvins) during both sterile and infectious inflammation. Metabolizes docosahexaenoate (DHA, C22:6(n-3)) to 17R-HDHA, a precursor of the D-series resolvins (RvDs). As a component of the biosynthetic pathway of E-series resolvins (RvEs), converts eicosapentaenoate (EPA, C20:5(n-3)) primarily to 18S-HEPE that is further metabolized by ALOX5 and LTA4H to generate 18S-RvE1 and 18S-RvE2. In vascular endothelial cells, converts docosapentaenoate (DPA, C22:5(n-3)) to 13R-HDPA, a precursor for 13-series resolvins (RvTs) shown to activate macrophage phagocytosis during bacterial infection. In activated leukocytes, contributes to oxygenation of hydroxyeicosatetraenoates (HETE) to diHETES (5,15-diHETE and 5,11-diHETE). Can also use linoleate (LA, (9Z,12Z)-octadecadienoate, C18:2(n-6)) as substrate and produce hydroxyoctadecadienoates (HODEs) in a regio- and stereospecific manner, being (9R)-HODE ((9R)-hydroxy-(10E,12Z)-octadecadienoate) and (13S)-HODE ((13S)-hydroxy-(9Z,11E)-octadecadienoate) its major products. During neuroinflammation, plays a role in neuronal secretion of specialized preresolving mediators (SPMs) 15R-lipoxin A4 that regulates phagocytic microglia. In Gallus gallus (Chicken), this protein is Prostaglandin G/H synthase 2 (PTGS2).